The following is a 414-amino-acid chain: Putative L-lactate dehydrogenase (414 aa).

The FMN hydroxy acid dehydrogenase domain occupies 29–406; the sequence is RRLGAALTIQ…SPRHVTQLRR (378 aa). Tyr-55 serves as a coordination point for a 2-oxocarboxylate. 2 residues coordinate FMN: Ser-137 and Gln-159. Tyr-161 serves as a coordination point for a 2-oxocarboxylate. Thr-187 lines the FMN pocket. Arg-196 serves as a coordination point for a 2-oxocarboxylate. Lys-277 serves as a coordination point for FMN. His-301 acts as the Proton acceptor in catalysis. Arg-304 is an a 2-oxocarboxylate binding site. FMN contacts are provided by residues 332 to 336 and 355 to 356; these read DTGIM and GR.

It belongs to the FMN-dependent alpha-hydroxy acid dehydrogenase family. It depends on FMN as a cofactor.

The catalysed reaction is (S)-lactate + A = pyruvate + AH2. The sequence is that of Putative L-lactate dehydrogenase (lldD) from Mycobacterium tuberculosis (strain ATCC 25618 / H37Rv).